The sequence spans 470 residues: MDLAAAAVAVSFPRPAPPPRRCAPRRHRRALAPRAASSSPSPSTAVAAPVYAPTPRDRALRTPHSGYHYDGTARPFFEGWYFKVSIPECRQSFCFMYSVENPLFRDGMSDLDRVIHGSRFTGVGAQILGADDKYICQFTEKSNNFWGSRHELMLGNTFIPNNGSTPPEGEVPPQEFSSRVLEGFQVTPIWHQGFIRDDGRSKYVPNVQTARWEYSTRPVYGWGDVTSKQKSTAGWLAAFPFFEPHWQICMAGGLSTGWIEWDGERFEFENAPSYSEKNWGAGFPRKWYWVQCNVFSGASGEVALTAAGGLRKIGLGETYESPSLIGIHYEGKFYEFVPWTGTVSWDIAPWGHWKLSGENKNHLVEIEATTKEPGTALRAPTMEAGLVPACKDTCYGDLRLQMWEKRNDGGKGKMILDATSNMAALEVGGGPWFNGWKGTTVSNEIVNNVVGTQVDVESLFPIPFLKPPGL.

Residues 1-61 (MDLAAAAVAV…APTPRDRALR (61 aa)) constitute a chloroplast transit peptide. Positions 14–48 (RPAPPPRRCAPRRHRRALAPRAASSSPSPSTAVAA) are disordered. Positions 22 to 31 (CAPRRHRRAL) are enriched in basic residues. The span at 32 to 48 (APRAASSSPSPSTAVAA) shows a compositional bias: low complexity.

In terms of tissue distribution, expressed in the roots, stems, leaves and spikelets.

It is found in the plastid. The protein resides in the chloroplast. Its subcellular location is the plastoglobule. It functions in the pathway cofactor biosynthesis; tocopherol biosynthesis. Functionally, involved in the synthesis of both tocopherols and tocotrienols (vitamin E), which presumably protect photosynthetic complexes from oxidative stress. Catalyzes the conversion of 2-methyl-6-phytyl-1,4-hydroquinone and 2,3-dimethyl-5-phytyl-1,4-hydroquinone (DMPQ) to delta- and gamma-tocopherol respectively. Also converts 2,3-dimethyl-5-geranylgeranyl-1,4-hydroquinone (DMGQ) to gamma-tocotrienol. The protein is Probable tocopherol cyclase, chloroplastic (VTE1) of Oryza sativa subsp. japonica (Rice).